The primary structure comprises 189 residues: Glycerol-3-phosphate acyltransferase (189 aa).

The next 5 helical transmembrane spans lie at 1 to 21 (MFWSLALLAYLLGSLSFAIVL), 50 to 70 (KLAILTLLGDLCKGMLPVLLA), 81 to 101 (AWVGICAVLGHLFPVYFRFQG), 111 to 131 (MLMALYFPAALLAIGAWVLTF), and 151 to 171 (LLAWREPEALLPMTVLTLMIV).

This sequence belongs to the PlsY family. Probably interacts with PlsX.

Its subcellular location is the cell inner membrane. The enzyme catalyses an acyl phosphate + sn-glycerol 3-phosphate = a 1-acyl-sn-glycero-3-phosphate + phosphate. It functions in the pathway lipid metabolism; phospholipid metabolism. Its function is as follows. Catalyzes the transfer of an acyl group from acyl-phosphate (acyl-PO(4)) to glycerol-3-phosphate (G3P) to form lysophosphatidic acid (LPA). This enzyme utilizes acyl-phosphate as fatty acyl donor, but not acyl-CoA or acyl-ACP. In Pseudomonas entomophila (strain L48), this protein is Glycerol-3-phosphate acyltransferase.